Consider the following 159-residue polypeptide: Ribosomal RNA large subunit methyltransferase H (159 aa).

S-adenosyl-L-methionine contacts are provided by residues Leu76, Gly108, and 127-132 (FSKMTF).

The protein belongs to the RNA methyltransferase RlmH family. In terms of assembly, homodimer.

The protein localises to the cytoplasm. It catalyses the reaction pseudouridine(1915) in 23S rRNA + S-adenosyl-L-methionine = N(3)-methylpseudouridine(1915) in 23S rRNA + S-adenosyl-L-homocysteine + H(+). In terms of biological role, specifically methylates the pseudouridine at position 1915 (m3Psi1915) in 23S rRNA. This chain is Ribosomal RNA large subunit methyltransferase H, found in Clostridium tetani (strain Massachusetts / E88).